Consider the following 695-residue polypeptide: Nicastrin (695 aa).

Residues 1–22 (MEMRLNAASIWLLILSYGATIA) form the signal peptide. At 23-654 (QGERTRDKMY…IFLRPSNVHQ (632 aa)) the chain is on the extracellular side. Residues asparagine 45, asparagine 108, asparagine 116, asparagine 138, asparagine 381, asparagine 461, asparagine 489, asparagine 585, and asparagine 609 are each glycosylated (N-linked (GlcNAc...) asparagine). A helical transmembrane segment spans residues 655-675 (VTTLSVGIVVLIISFCLVYII). Residues 676 to 695 (SSRSEVLFEDLPASNAALFG) lie on the Cytoplasmic side of the membrane.

This sequence belongs to the nicastrin family. In terms of assembly, component of the gamma-secretase complex, a complex composed of a presenilin (Psn) homodimer, nicastrin (Nct), Aph-1 and Pen-2.

It is found in the membrane. Essential subunit of the gamma-secretase complex, an endoprotease complex that catalyzes the intramembrane cleavage of integral membrane proteins such as Notch. It probably represents a stabilizing cofactor required for the assembly of the gamma-secretase complex. The polypeptide is Nicastrin (Drosophila melanogaster (Fruit fly)).